Reading from the N-terminus, the 286-residue chain is NADPH-dependent 7-cyano-7-deazaguanine reductase (286 aa).

92–94 (IES) is a binding site for substrate. 94–95 (SK) provides a ligand contact to NADPH. Cys194 functions as the Thioimide intermediate in the catalytic mechanism. The Proton donor role is filled by Asp201. 233–234 (HE) provides a ligand contact to substrate. Residue 262–263 (RG) coordinates NADPH.

This sequence belongs to the GTP cyclohydrolase I family. QueF type 2 subfamily. As to quaternary structure, homodimer.

It localises to the cytoplasm. The catalysed reaction is 7-aminomethyl-7-carbaguanine + 2 NADP(+) = 7-cyano-7-deazaguanine + 2 NADPH + 3 H(+). It functions in the pathway tRNA modification; tRNA-queuosine biosynthesis. Functionally, catalyzes the NADPH-dependent reduction of 7-cyano-7-deazaguanine (preQ0) to 7-aminomethyl-7-deazaguanine (preQ1). This chain is NADPH-dependent 7-cyano-7-deazaguanine reductase, found in Shewanella oneidensis (strain ATCC 700550 / JCM 31522 / CIP 106686 / LMG 19005 / NCIMB 14063 / MR-1).